The sequence spans 693 residues: Methionine--tRNA ligase (693 aa).

The 'HIGH' region motif lies at 12–22; the sequence is PYANGPLHLGH. 4 residues coordinate Zn(2+): Cys143, Cys146, Cys156, and Cys159. The 'KMSKS' region motif lies at 330-334; that stretch reads KMSKS. Lys333 is an ATP binding site. The interval 557–576 is disordered; the sequence is APTAKNEAAKPAAPAAAKTE. The region spanning 590–693 is the tRNA-binding domain; sequence DFAKLDLRIG…SGAQPGMPVR (104 aa).

It belongs to the class-I aminoacyl-tRNA synthetase family. MetG type 1 subfamily. As to quaternary structure, homodimer. Requires Zn(2+) as cofactor.

The protein localises to the cytoplasm. The catalysed reaction is tRNA(Met) + L-methionine + ATP = L-methionyl-tRNA(Met) + AMP + diphosphate. Is required not only for elongation of protein synthesis but also for the initiation of all mRNA translation through initiator tRNA(fMet) aminoacylation. This Stenotrophomonas maltophilia (strain R551-3) protein is Methionine--tRNA ligase.